The following is a 134-amino-acid chain: Alkaline proteinase inhibitor (134 aa).

A signal peptide spans 1–26 (MVFAAWYLKFAFFVALAFSIIGGSMA). C50 and C73 form a disulfide bridge.

The protein belongs to the protease inhibitor I38 family.

It localises to the periplasm. In terms of biological role, inhibitor of the alkaline protease. This Photorhabdus luminescens (Xenorhabdus luminescens) protein is Alkaline proteinase inhibitor (inh).